Consider the following 216-residue polypeptide: Large ribosomal subunit protein uL3 (216 aa).

A disordered region spans residues 134 to 153 (RATHGNSRSHNVPGSIGMAQ). Residue Gln-153 is modified to N5-methylglutamine.

The protein belongs to the universal ribosomal protein uL3 family. In terms of assembly, part of the 50S ribosomal subunit. Forms a cluster with proteins L14 and L19. In terms of processing, methylated by PrmB.

Its function is as follows. One of the primary rRNA binding proteins, it binds directly near the 3'-end of the 23S rRNA, where it nucleates assembly of the 50S subunit. In Cupriavidus taiwanensis (strain DSM 17343 / BCRC 17206 / CCUG 44338 / CIP 107171 / LMG 19424 / R1) (Ralstonia taiwanensis (strain LMG 19424)), this protein is Large ribosomal subunit protein uL3.